A 642-amino-acid polypeptide reads, in one-letter code: Threonine--tRNA ligase (642 aa).

A TGS domain is found at M1–T61. Residues D243–P534 are catalytic. K286 carries the N6-acetyllysine modification. Zn(2+) contacts are provided by C334, H385, and H511.

The protein belongs to the class-II aminoacyl-tRNA synthetase family. In terms of assembly, homodimer. Zn(2+) is required as a cofactor.

The protein resides in the cytoplasm. It catalyses the reaction tRNA(Thr) + L-threonine + ATP = L-threonyl-tRNA(Thr) + AMP + diphosphate + H(+). Its function is as follows. Catalyzes the attachment of threonine to tRNA(Thr) in a two-step reaction: L-threonine is first activated by ATP to form Thr-AMP and then transferred to the acceptor end of tRNA(Thr). Also edits incorrectly charged L-seryl-tRNA(Thr). This is Threonine--tRNA ligase from Escherichia coli O9:H4 (strain HS).